A 181-amino-acid chain; its full sequence is Protoporphyrinogen IX dehydrogenase [quinone] (181 aa).

In terms of domain architecture, Flavodoxin-like spans 3–172 (TLILFSTRDG…QVANFAREIA (170 aa)). Residues 9-13 (TRDGQ) and 84-152 (FYSV…ETDT) each bind FMN.

The protein belongs to the HemG family. Requires FMN as cofactor.

It localises to the cell inner membrane. It carries out the reaction protoporphyrinogen IX + 3 a menaquinone = protoporphyrin IX + 3 a menaquinol. The catalysed reaction is protoporphyrinogen IX + 3 a ubiquinone = protoporphyrin IX + 3 a ubiquinol. The enzyme catalyses protoporphyrinogen IX + 3 a quinone = protoporphyrin IX + 3 a quinol. It functions in the pathway porphyrin-containing compound metabolism; protoporphyrin-IX biosynthesis; protoporphyrin-IX from protoporphyrinogen-IX: step 1/1. Catalyzes the 6-electron oxidation of protoporphyrinogen IX to form protoporphyrin IX; under anaerobic conditions uses menaquinone as an electron acceptor, under aerobic condition uses ubiquinone as an electron acceptor. The sequence is that of Protoporphyrinogen IX dehydrogenase [quinone] from Escherichia coli O157:H7.